Here is a 544-residue protein sequence, read N- to C-terminus: Chaperonin GroEL 1 (544 aa).

Residues 29 to 32, 86 to 90, G413, 479 to 481, and D495 contribute to the ATP site; these read TLGP, DGTTT, and NAA. Residues 525 to 544 form a disordered region; the sequence is PEPKDNAPAGAGAGGGDFDY. The span at 535–544 shows a compositional bias: gly residues; it reads AGAGGGDFDY.

The protein belongs to the chaperonin (HSP60) family. In terms of assembly, forms a cylinder of 14 subunits composed of two heptameric rings stacked back-to-back. Interacts with the co-chaperonin GroES.

It localises to the cytoplasm. The enzyme catalyses ATP + H2O + a folded polypeptide = ADP + phosphate + an unfolded polypeptide.. Functionally, together with its co-chaperonin GroES, plays an essential role in assisting protein folding. The GroEL-GroES system forms a nano-cage that allows encapsulation of the non-native substrate proteins and provides a physical environment optimized to promote and accelerate protein folding. The chain is Chaperonin GroEL 1 from Nostoc sp. (strain PCC 7120 / SAG 25.82 / UTEX 2576).